The sequence spans 504 residues: Multidrug efflux pump LfrA (504 aa).

14 helical membrane passes run 19–39 (WVAL…NTVL), 58–78 (LWIV…MGSL), 87–107 (LLLI…FAPS), 110–130 (LLVG…PSTL), 145–165 (LAIA…PIVG), 172–192 (FHWG…LVLG), 206–226 (PFDP…VWAV), 233–253 (GLSA…ALFV), 275–295 (TSSI…IFFI), 309–329 (TAGL…LAVV), 338–358 (DTLM…ILLF), 361–381 (NLTV…VGVS), 408–428 (AYEL…TAFY), and 480–500 (IAPT…VVGV).

This sequence belongs to the major facilitator superfamily.

It localises to the cell inner membrane. Inhibited by the protonophore carbonyl cyanide m-chorophenylhydrazone (CCCP). Ethidium bromide efflux is inhibited by chlorpromazine, thioridazine and verapamil. Its function is as follows. Energy-dependent efflux pump that contributes to drug resistance. Catalyzes the efflux of norfloxacin and several related fluoroquinolones (FQ). Contributes significantly to the intrinsic MICs for ethidium bromide and acriflavine. Overexpression confers low-level resistance to hydrophilic FQ such as ciprofloxacin, ofloxacin and levofloxacin, and to ethidium bromide, acridine, acriflavine, rhodamine 123 and some quaternary ammonium compounds. May contribute to resistance to certain beta-lactams. Probably uses the proton motive force to export drugs. This chain is Multidrug efflux pump LfrA, found in Mycolicibacterium smegmatis (strain ATCC 700084 / mc(2)155) (Mycobacterium smegmatis).